A 95-amino-acid chain; its full sequence is Protein TusB (95 aa).

The protein belongs to the DsrH/TusB family. As to quaternary structure, heterohexamer, formed by a dimer of trimers. The hexameric TusBCD complex contains 2 copies each of TusB, TusC and TusD. The TusBCD complex interacts with TusE.

It is found in the cytoplasm. Functionally, part of a sulfur-relay system required for 2-thiolation of 5-methylaminomethyl-2-thiouridine (mnm(5)s(2)U) at tRNA wobble positions. This chain is Protein TusB, found in Serratia proteamaculans (strain 568).